Consider the following 501-residue polypeptide: Sensor histidine kinase PdtaS (501 aa).

The interval 4-150 is GAF; the sequence is LGDLLAEHTV…HLETAYRLCA (147 aa). The tract at residues 179 to 291 is PAS-like; it reads DGFIRLDVDG…TEVKRRDRAL (113 aa). In terms of domain architecture, Histidine kinase spans 300-495; that stretch reads EIHHRVKNNL…DVVLRVPVGR (196 aa). His-303 bears the Phosphohistidine; by autocatalysis mark.

In terms of processing, autophosphorylated.

It localises to the cytoplasm. It catalyses the reaction ATP + protein L-histidine = ADP + protein N-phospho-L-histidine.. In terms of biological role, member of the two-component regulatory system PdtaR/PdtaS. This two-component system plays an essential role in mycobacterial adaptation to poor nutrient conditions. Nutrient deprivation results in increasing intracellular concentrations of cyclic diguanosine monophosphate (c-di-GMP), which binds to the PdtaS sensor and promotes its autophosphorylation, leading to the activation of the signaling cascade. The phosphate group is then transferred to PdtaR. Its function is as follows. In addition, the PdtaR/PdtaS two-component system controls copper and nitric oxide (NO) resistance downstream of the intramembrane protease Rip1. This coupled Rip1/PdtaS/PdtaR circuit controls NO resistance and acute lung infection in mice by relieving PdtaR/PdtaS-mediated repression of isonitrile chalkophore biosynthesis. Two signals are required to fully inactivate the PdtaR/PdtaS system and mediate NO resistance: a cytoplasmic inhibitory signal through the PdtaS kinase mediated by direct sensing of NO and the production of PPE1-5', an NO-induced small RNA, to sequester PdtaR. The polypeptide is Sensor histidine kinase PdtaS (pdtaS) (Mycobacterium tuberculosis (strain CDC 1551 / Oshkosh)).